The primary structure comprises 192 residues: 3-hydroxyanthranilate 3,4-dioxygenase (192 aa).

Residue R50 coordinates O2. Residues H54, E60, and H102 each coordinate Fe cation. E60 is a substrate binding site. Substrate-binding residues include R106 and E116. Residues C131, C134, C168, and C171 each contribute to the a divalent metal cation site.

Belongs to the 3-HAO family. Fe(2+) serves as cofactor.

It localises to the cytoplasm. It catalyses the reaction 3-hydroxyanthranilate + O2 = (2Z,4Z)-2-amino-3-carboxymuconate 6-semialdehyde. It participates in cofactor biosynthesis; NAD(+) biosynthesis; quinolinate from L-kynurenine: step 3/3. In terms of biological role, catalyzes the oxidative ring opening of 3-hydroxyanthranilate to 2-amino-3-carboxymuconate semialdehyde, which spontaneously cyclizes to quinolinate. The chain is 3-hydroxyanthranilate 3,4-dioxygenase from Coccidioides immitis (strain RS) (Valley fever fungus).